Reading from the N-terminus, the 266-residue chain is 4-hydroxy-tetrahydrodipicolinate reductase (266 aa).

NAD(+) is bound at residue 10–15 (GPRGRM). Lys-38 provides a ligand contact to NADP(+). Residues 99-101 (GTT) and 125-128 (APNF) contribute to the NAD(+) site. The Proton donor/acceptor role is filled by His-155. (S)-2,3,4,5-tetrahydrodipicolinate is bound at residue His-156. The active-site Proton donor is Lys-159. Residue 165–166 (GT) participates in (S)-2,3,4,5-tetrahydrodipicolinate binding.

Belongs to the DapB family.

Its subcellular location is the cytoplasm. It catalyses the reaction (S)-2,3,4,5-tetrahydrodipicolinate + NAD(+) + H2O = (2S,4S)-4-hydroxy-2,3,4,5-tetrahydrodipicolinate + NADH + H(+). The catalysed reaction is (S)-2,3,4,5-tetrahydrodipicolinate + NADP(+) + H2O = (2S,4S)-4-hydroxy-2,3,4,5-tetrahydrodipicolinate + NADPH + H(+). It participates in amino-acid biosynthesis; L-lysine biosynthesis via DAP pathway; (S)-tetrahydrodipicolinate from L-aspartate: step 4/4. Functionally, catalyzes the conversion of 4-hydroxy-tetrahydrodipicolinate (HTPA) to tetrahydrodipicolinate. The sequence is that of 4-hydroxy-tetrahydrodipicolinate reductase from Bacillus cereus (strain ATCC 14579 / DSM 31 / CCUG 7414 / JCM 2152 / NBRC 15305 / NCIMB 9373 / NCTC 2599 / NRRL B-3711).